Reading from the N-terminus, the 402-residue chain is Bacillibactin exporter (402 aa).

11 consecutive transmembrane segments (helical) span residues 4–24, 39–59, 69–89, 104–124, 162–182, 212–232, 247–267, 278–298, 302–322, 342–362, and 368–388; these read IIAL…LIPV, VSLI…IAGY, ILLP…FAST, LQGI…GDLF, FVPF…VLFL, WLYT…GVLF, VAKG…SFIA, MKFC…ALWW, FYFL…ALPA, FYNS…AALM, and IIFI…LFTV.

It belongs to the major facilitator superfamily.

Its subcellular location is the cell membrane. Functionally, involved in secretion of bacillibactin. In Bacillus subtilis (strain 168), this protein is Bacillibactin exporter (ymfD).